A 343-amino-acid chain; its full sequence is Probable dual-specificity RNA methyltransferase RlmN (343 aa).

E94 functions as the Proton acceptor in the catalytic mechanism. In terms of domain architecture, Radical SAM core spans 100 to 330; sequence YDSRVTVCVS…ATVRMSMGSD (231 aa). A disulfide bridge links C107 with C335. Residues C114, C118, and C121 each coordinate [4Fe-4S] cluster. Residues 161–162, S193, 216–218, and N292 each bind S-adenosyl-L-methionine; these read GE and SLH. The S-methylcysteine intermediate role is filled by C335.

Belongs to the radical SAM superfamily. RlmN family. [4Fe-4S] cluster serves as cofactor.

The protein localises to the cytoplasm. It carries out the reaction adenosine(2503) in 23S rRNA + 2 reduced [2Fe-2S]-[ferredoxin] + 2 S-adenosyl-L-methionine = 2-methyladenosine(2503) in 23S rRNA + 5'-deoxyadenosine + L-methionine + 2 oxidized [2Fe-2S]-[ferredoxin] + S-adenosyl-L-homocysteine. The catalysed reaction is adenosine(37) in tRNA + 2 reduced [2Fe-2S]-[ferredoxin] + 2 S-adenosyl-L-methionine = 2-methyladenosine(37) in tRNA + 5'-deoxyadenosine + L-methionine + 2 oxidized [2Fe-2S]-[ferredoxin] + S-adenosyl-L-homocysteine. Its function is as follows. Specifically methylates position 2 of adenine 2503 in 23S rRNA and position 2 of adenine 37 in tRNAs. This Clostridioides difficile (strain 630) (Peptoclostridium difficile) protein is Probable dual-specificity RNA methyltransferase RlmN.